The sequence spans 728 residues: Catalase-peroxidase 1 (728 aa).

An N-terminal signal peptide occupies residues 1–22 (MDKTQSSQGKCPVMHGANSAVA). A cross-link (tryptophyl-tyrosyl-methioninium (Trp-Tyr) (with M-251)) is located at residues 97–225 (WHSAGTYRVA…LAAVMMGLIY (129 aa)). The active-site Proton acceptor is the histidine 98. The segment at residues 225–251 (YVNPEGVDGKPDPLRTAQDVRVTFARM) is a cross-link (tryptophyl-tyrosyl-methioninium (Tyr-Met) (with W-97)). Histidine 266 lines the heme b pocket.

It belongs to the peroxidase family. Peroxidase/catalase subfamily. Homodimer or homotetramer. Requires heme b as cofactor. Post-translationally, formation of the three residue Trp-Tyr-Met cross-link is important for the catalase, but not the peroxidase activity of the enzyme.

It carries out the reaction H2O2 + AH2 = A + 2 H2O. It catalyses the reaction 2 H2O2 = O2 + 2 H2O. In terms of biological role, bifunctional enzyme with both catalase and broad-spectrum peroxidase activity. This chain is Catalase-peroxidase 1, found in Shewanella sp. (strain MR-7).